A 501-amino-acid polypeptide reads, in one-letter code: Ribose import ATP-binding protein RbsA (501 aa).

2 ABC transporter domains span residues 5–241 (LQLK…VGRK) and 252–495 (APGE…VGKL). 37-44 (GENGAGKS) is an ATP binding site.

The protein belongs to the ABC transporter superfamily. Ribose importer (TC 3.A.1.2.1) family. In terms of assembly, the complex is composed of an ATP-binding protein (RbsA), two transmembrane proteins (RbsC) and a solute-binding protein (RbsB).

It localises to the cell inner membrane. The catalysed reaction is D-ribose(out) + ATP + H2O = D-ribose(in) + ADP + phosphate + H(+). Part of the ABC transporter complex RbsABC involved in ribose import. Responsible for energy coupling to the transport system. This chain is Ribose import ATP-binding protein RbsA, found in Salmonella typhimurium (strain LT2 / SGSC1412 / ATCC 700720).